A 279-amino-acid chain; its full sequence is Nitrate import permease protein NrtB (279 aa).

The 185-residue stretch at 86–270 folds into the ABC transmembrane type-1 domain; sequence IAASLQRVAV…LLNALVGFIA (185 aa). 6 helical membrane-spanning segments follow: residues 98–118, 124–144, 151–171, 196–216, 217–237, and 249–269; these read LMAA…VLMF, IFQV…LAAF, AIFV…AVGV, VLLP…IGLS, WLAI…FFIW, and ILAI…VGFI.

This sequence belongs to the binding-protein-dependent transport system permease family. CysTW subfamily. As to quaternary structure, the complex is composed of two ATP-binding proteins (NrtC and NrtD), two transmembrane proteins (NrtB) and a solute-binding protein (NrtA).

It is found in the cell inner membrane. In terms of biological role, part of the ABC transporter complex NrtABCD involved in nitrate uptake. The complex is probably also involved in nitrite transport. Probably responsible for the translocation of the substrate across the membrane. This is Nitrate import permease protein NrtB from Leptolyngbya laminosa (Phormidium laminosum).